The primary structure comprises 416 residues: Succinate--CoA ligase [ADP-forming] subunit beta (416 aa).

Residues 1-14 (MLRMAPKTVGAVRN) constitute a hydrogenosome transit peptide. Residues K64, 71–73 (GRG), and E132 contribute to the ATP site. Mg(2+) contacts are provided by N224 and D242. Substrate is bound by residues N293 and 350-352 (GIM).

Belongs to the succinate/malate CoA ligase beta subunit family. Heterodimer of an alpha and a beta subunit. Requires Mg(2+) as cofactor.

It is found in the hydrogenosome. It carries out the reaction succinate + ATP + CoA = succinyl-CoA + ADP + phosphate. It participates in carbohydrate metabolism; tricarboxylic acid cycle; succinate from succinyl-CoA (ligase route): step 1/1. In terms of biological role, succinyl-CoA synthetase functions in the citric acid cycle (TCA), coupling the hydrolysis of succinyl-CoA to the synthesis of ATP and thus represents the only step of substrate-level phosphorylation in the TCA. The beta subunit provides nucleotide specificity of the enzyme and binds the substrate succinate, while the binding sites for coenzyme A and phosphate are found in the alpha subunit. The protein is Succinate--CoA ligase [ADP-forming] subunit beta (SCSb) of Blastocystis sp. subtype 1 (strain ATCC 50177 / NandII).